The primary structure comprises 345 residues: Methylthioribose-1-phosphate isomerase (345 aa).

Substrate is bound by residues 47–49 (RGA), Arg-90, and Gln-197. The active-site Proton donor is Asp-238. Substrate is bound at residue 248–249 (NK).

Belongs to the eIF-2B alpha/beta/delta subunits family. MtnA subfamily.

It carries out the reaction 5-(methylsulfanyl)-alpha-D-ribose 1-phosphate = 5-(methylsulfanyl)-D-ribulose 1-phosphate. The protein operates within amino-acid biosynthesis; L-methionine biosynthesis via salvage pathway; L-methionine from S-methyl-5-thio-alpha-D-ribose 1-phosphate: step 1/6. In terms of biological role, catalyzes the interconversion of methylthioribose-1-phosphate (MTR-1-P) into methylthioribulose-1-phosphate (MTRu-1-P). The sequence is that of Methylthioribose-1-phosphate isomerase from Thermoanaerobacter pseudethanolicus (strain ATCC 33223 / 39E) (Clostridium thermohydrosulfuricum).